A 501-amino-acid polypeptide reads, in one-letter code: MMSISLLGGIVTAVCCCLWLLLGMRRRQTGEPPLENGIIPYLGCALQFGANPLEFLRANQRKHGHIFTCQLMGNYVHFITNPLSYHKVLCHGKYLDWKKFHFTASAKAFGHRSIDPSDGNTTDNINKTIIKTLQGDALNLLAAAMMENLQLVLRPQVAPQPEKPAWVTEGMYSFCYRVMFEAGYVTLFGKDPIGHDAQKALILNNLDNFKQFDKIFPALVAGFPIHVFKTGHYAREKLAEGLRLQKLRKRDHISELVRFLNDTLSTLDDAEKAKSLLAVLWASQANTIPATFWCLFQTIRSPEAMKAASEEVNKTLEKAGQKISLDDKPIYLNQIELDSMPVLDSIIKESLRLSSASLNIRTAKEDFTLHLQDGSYNIRKDDIIALYPQLMHLDPEIYPDPLTFKYDRYLDENGKTKTTFYSHGLKLKYYYMPFGSGATICPGRLFAVQEIKQFLILMLSYFDLELVESHVKCPPLDQSRAGLGILPPSNDIEFRYKLKHL.

A helical membrane pass occupies residues 4 to 24 (ISLLGGIVTAVCCCLWLLLGM). Cysteine 441 provides a ligand contact to heme.

This sequence belongs to the cytochrome P450 family. Requires heme as cofactor.

It is found in the endoplasmic reticulum membrane. The protein localises to the microsome membrane. The enzyme catalyses cholesterol + reduced [NADPH--hemoprotein reductase] + O2 = 7alpha-hydroxycholesterol + oxidized [NADPH--hemoprotein reductase] + H2O + H(+). It carries out the reaction 4beta-hydroxycholesterol + reduced [NADPH--hemoprotein reductase] + O2 = 4beta,7alpha-dihydroxycholesterol + oxidized [NADPH--hemoprotein reductase] + H2O + H(+). It catalyses the reaction lathosterol + reduced [NADPH--hemoprotein reductase] + O2 = 7alpha,8alpha-epoxy-5alpha-cholestan-3beta-ol + oxidized [NADPH--hemoprotein reductase] + H2O + H(+). The catalysed reaction is lathosterol + reduced [NADPH--hemoprotein reductase] + O2 = 5alpha-cholestan-7-oxo-3beta-ol + oxidized [NADPH--hemoprotein reductase] + H2O + H(+). The enzyme catalyses 7-dehydrocholesterol + reduced [NADPH--hemoprotein reductase] + O2 = 7-oxocholesterol + oxidized [NADPH--hemoprotein reductase] + H2O + H(+). It carries out the reaction (24S)-hydroxycholesterol + reduced [NADPH--hemoprotein reductase] + O2 = (24S)-7alpha-dihydroxycholesterol + oxidized [NADPH--hemoprotein reductase] + H2O + H(+). It catalyses the reaction (24R)-hydroxycholesterol + reduced [NADPH--hemoprotein reductase] + O2 = (24R)-7alpha-dihydroxycholesterol + oxidized [NADPH--hemoprotein reductase] + H2O + H(+). It participates in lipid metabolism; bile acid biosynthesis. The protein operates within steroid metabolism; cholesterol degradation. A cytochrome P450 monooxygenase involved in the metabolism of endogenous cholesterol and its oxygenated derivatives (oxysterols). Mechanistically, uses molecular oxygen inserting one oxygen atom into a substrate, and reducing the second into a water molecule, with two electrons provided by NADPH via cytochrome P450 reductase (CPR; NADPH-ferrihemoprotein reductase). Functions as a critical regulatory enzyme of bile acid biosynthesis and cholesterol homeostasis. Catalyzes the hydroxylation of carbon hydrogen bond at 7-alpha position of cholesterol, a rate-limiting step in cholesterol catabolism and bile acid biosynthesis. 7-alpha hydroxylates several oxysterols, including 4beta-hydroxycholesterol and 24-hydroxycholesterol. Catalyzes the oxidation of the 7,8 double bond of 7-dehydrocholesterol and lathosterol with direct and predominant formation of the 7-keto derivatives. This is Cytochrome P450 7A1 (CYP7A1) from Sus scrofa (Pig).